The sequence spans 319 residues: Telomere-binding protein cav (319 aa).

The segment at 107–312 (RRKMVQPYPE…SISFQNSGSE (206 aa)) is required for binding to Su(var)205. 2 disordered regions span residues 141–163 (WQKQKRRNQSAHATQPDSQDNEV) and 186–248 (PSDL…PDYY). Short sequence motifs (su(var)205-binding Pro-containing repeat) lie at residues 220–224 (PETQM) and 273–279 (PETEMNE). Residues 291–311 (SMSIGPSINSDGSISFQNSGS) are compositionally biased toward polar residues. The tract at residues 291–319 (SMSIGPSINSDGSISFQNSGSEPIDVDVN) is disordered.

As to quaternary structure, interacts (via C-terminus) with Su(var)205 dimer (via hinge and chromoshadow domain) and with moi to form the terminin, telomere-capping, complex. Interacts with HP6, which is also part of the terminin complex.

The protein resides in the nucleus. Its subcellular location is the chromosome. It localises to the telomere. Its function is as follows. Binds to chromosome ends in a sequence-dependent manner and is required for telomere capping. The polypeptide is Telomere-binding protein cav (Drosophila yakuba (Fruit fly)).